Reading from the N-terminus, the 356-residue chain is GDP-mannose:di-myo-inositol-1,3'-phosphate beta-1,2-mannosyltransferase (356 aa).

It belongs to the MDIP synthase family. It depends on Mg(2+) as a cofactor.

The catalysed reaction is bis(myo-inositol) 1,3'-phosphate + GDP-alpha-D-mannose = 2-O-(beta-D-mannosyl)-bis(myo-inositol) 1,3'-phosphate + GDP + H(+). It catalyses the reaction 2-O-(beta-D-mannosyl)-bis(myo-inositol) 1,3'-phosphate + GDP-alpha-D-mannose = 2-O-(beta-D-mannosyl-(1-&gt;2)-beta-D-mannosyl)-bis(myo-inositol) 1,3'-phosphate + GDP + H(+). The enzyme catalyses bis(myo-inositol) 1,3'-phosphate + 2 GDP-alpha-D-mannose = 2-O-(beta-D-mannosyl-(1-&gt;2)-beta-D-mannosyl)-bis(myo-inositol) 1,3'-phosphate + 2 GDP + 2 H(+). Its function is as follows. Catalyzes the transfer of the mannosyl group from GDP-mannose to di-myo-inositol-1,3'-phosphate (DIP), producing mannosyl-di-myo-inositol phosphate (MDIP). Can also use MDIP as an acceptor of a second mannose residue, yielding di-mannosyl-di-myo-inositol phosphate (MMDIP). This is GDP-mannose:di-myo-inositol-1,3'-phosphate beta-1,2-mannosyltransferase from Aquifex aeolicus (strain VF5).